We begin with the raw amino-acid sequence, 328 residues long: Nucleotide-binding protein Blon_1085/BLIJ_1109 (328 aa).

A disordered region spans residues 1-33 (MSQQTTIRDTGEAAATNAPANSATSTSTPDNQP). Residues 13–29 (AAATNAPANSATSTSTP) show a composition bias toward low complexity. 46–53 (GMSGAGRS) lines the ATP pocket. 101–104 (DVRS) serves as a coordination point for GTP.

This sequence belongs to the RapZ-like family.

Functionally, displays ATPase and GTPase activities. The polypeptide is Nucleotide-binding protein Blon_1085/BLIJ_1109 (Bifidobacterium longum subsp. infantis (strain ATCC 15697 / DSM 20088 / JCM 1222 / NCTC 11817 / S12)).